A 104-amino-acid chain; its full sequence is L-rhamnose mutarotase (104 aa).

Tyrosine 18 is a binding site for substrate. Histidine 22 serves as the catalytic Proton donor. Substrate contacts are provided by residues tyrosine 41 and 76-77; that span reads WW.

This sequence belongs to the rhamnose mutarotase family. Homodimer.

Its subcellular location is the cytoplasm. It catalyses the reaction alpha-L-rhamnose = beta-L-rhamnose. It participates in carbohydrate metabolism; L-rhamnose metabolism. Its function is as follows. Involved in the anomeric conversion of L-rhamnose. This is L-rhamnose mutarotase from Listeria monocytogenes serovar 1/2a (strain ATCC BAA-679 / EGD-e).